We begin with the raw amino-acid sequence, 289 residues long: ATP synthase gamma chain (289 aa).

This sequence belongs to the ATPase gamma chain family. In terms of assembly, F-type ATPases have 2 components, CF(1) - the catalytic core - and CF(0) - the membrane proton channel. CF(1) has five subunits: alpha(3), beta(3), gamma(1), delta(1), epsilon(1). CF(0) has three main subunits: a, b and c.

Its subcellular location is the cell membrane. Functionally, produces ATP from ADP in the presence of a proton gradient across the membrane. The gamma chain is believed to be important in regulating ATPase activity and the flow of protons through the CF(0) complex. The polypeptide is ATP synthase gamma chain (Lawsonia intracellularis (strain PHE/MN1-00)).